The primary structure comprises 196 residues: uncharacterized protein (196 aa).

The N-terminal stretch at 1–23 (MSARAPKELRLALPPCLLNRTFA) is a signal peptide. N19 and N26 each carry an N-linked (GlcNAc...) asparagine glycan. The Extracellular portion of the chain corresponds to 24–60 (SHNASGGSNAGIRSSGAGGGTCITQVGQQLFQSFSST). The chain crosses the membrane as a helical span at residues 61-81 (LVLIVLVTLIFCLIVLSLSTF). Topologically, residues 82–196 (HIHKRRMKKR…EGLLQTVVLS (115 aa)) are cytoplasmic. The segment at 93–184 (MQRAQEEYER…AHAASSCLDT (92 aa)) is disordered. Basic and acidic residues-rich tracts occupy residues 95–106 (RAQEEYERDHCS) and 124–135 (HGKETRLERQPR). Residues 161–171 (CAPPPPPPVPS) show a composition bias toward pro residues. Over residues 172–181 (PHGAHAASSC) the composition is skewed to low complexity.

The protein localises to the membrane. This is an uncharacterized protein from Rattus norvegicus (Rat).